Here is a 340-residue protein sequence, read N- to C-terminus: L-threonine 3-dehydrogenase (340 aa).

Cysteine 38 is a binding site for Zn(2+). Residues threonine 40 and histidine 43 each act as charge relay system in the active site. The Zn(2+) site is built by histidine 63, glutamate 64, cysteine 93, cysteine 96, cysteine 99, and cysteine 107. NAD(+) is bound by residues isoleucine 175, aspartate 195, arginine 200, 262-264 (LGI), and 286-287 (IY).

It belongs to the zinc-containing alcohol dehydrogenase family. In terms of assembly, homotetramer. It depends on Zn(2+) as a cofactor.

The protein localises to the cytoplasm. The catalysed reaction is L-threonine + NAD(+) = (2S)-2-amino-3-oxobutanoate + NADH + H(+). Its pathway is amino-acid degradation; L-threonine degradation via oxydo-reductase pathway; glycine from L-threonine: step 1/2. Its function is as follows. Catalyzes the NAD(+)-dependent oxidation of L-threonine to 2-amino-3-ketobutyrate. In Legionella pneumophila subsp. pneumophila (strain Philadelphia 1 / ATCC 33152 / DSM 7513), this protein is L-threonine 3-dehydrogenase.